We begin with the raw amino-acid sequence, 403 residues long: Flavohemoprotein (403 aa).

One can recognise a Globin domain in the interval Met1–Lys138. His85 contacts heme b. Residues Tyr95 and Glu137 each act as charge relay system in the active site. A reductase region spans residues Gly149–Gly403. Residues Arg152–Gln257 form the FAD-binding FR-type domain. Residues Tyr190 and Arg206–Ser209 contribute to the FAD site. An NADP(+)-binding site is contributed by Gly269–Pro274. FAD is bound at residue Thr390–Pro393.

It belongs to the globin family. Two-domain flavohemoproteins subfamily. This sequence in the C-terminal section; belongs to the flavoprotein pyridine nucleotide cytochrome reductase family. The cofactor is heme b. It depends on FAD as a cofactor.

It carries out the reaction 2 nitric oxide + NADPH + 2 O2 = 2 nitrate + NADP(+) + H(+). The catalysed reaction is 2 nitric oxide + NADH + 2 O2 = 2 nitrate + NAD(+) + H(+). The polypeptide is Flavohemoprotein (Deinococcus radiodurans (strain ATCC 13939 / DSM 20539 / JCM 16871 / CCUG 27074 / LMG 4051 / NBRC 15346 / NCIMB 9279 / VKM B-1422 / R1)).